The sequence spans 718 residues: Threonine--tRNA ligase, mitochondrial (718 aa).

Residue Ser-52 is modified to Phosphoserine. A TGS domain is found at 55–121 (QKEPRTIKIS…ETDSDLRFLT (67 aa)).

This sequence belongs to the class-II aminoacyl-tRNA synthetase family. In terms of assembly, homodimer.

It is found in the mitochondrion matrix. The catalysed reaction is tRNA(Thr) + L-threonine + ATP = L-threonyl-tRNA(Thr) + AMP + diphosphate + H(+). Functionally, catalyzes the attachment of threonine to tRNA(Thr) in a two-step reaction: threonine is first activated by ATP to form Thr-AMP and then transferred to the acceptor end of tRNA(Thr). Also edits incorrectly charged tRNA(Thr) via its editing domain. This chain is Threonine--tRNA ligase, mitochondrial (TARS2), found in Homo sapiens (Human).